The chain runs to 200 residues: Signal peptidase complex catalytic subunit SEC11 (200 aa).

Residues methionine 1 to threonine 15 are Cytoplasmic-facing. The chain crosses the membrane as a helical; Signal-anchor for type II membrane protein span at residues leucine 16–tryptophan 33. Residues lysine 34 to glutamate 200 are Lumenal-facing. Asparagine 41 carries an N-linked (GlcNAc...) asparagine glycan. Active-site charge relay system residues include serine 53 and histidine 92. The segment at glycine 101–methionine 131 is disordered. Over residues glycine 103–serine 119 the composition is skewed to basic and acidic residues. The active-site Charge relay system is the aspartate 142. Positions valine 186–leucine 197 are C-terminal short (CTS) helix.

Belongs to the peptidase S26B family. Component of the signal peptidase complex (SPC) composed of a catalytic subunit SEC11 and three accessory subunits SPC1, SPC2 and SPC3. The complex induces a local thinning of the ER membrane which is used to measure the length of the signal peptide (SP) h-region of protein substrates. This ensures the selectivity of the complex towards h-regions shorter than 18-20 amino acids. SPC associates with the translocon complex.

The protein resides in the endoplasmic reticulum membrane. It carries out the reaction Cleavage of hydrophobic, N-terminal signal or leader sequences from secreted and periplasmic proteins.. Its function is as follows. Catalytic component of the signal peptidase complex (SPC) which catalyzes the cleavage of N-terminal signal sequences from nascent proteins as they are translocated into the lumen of the endoplasmic reticulum. Specifically cleaves N-terminal signal peptides that contain a hydrophobic alpha-helix (h-region) shorter than 18-20 amino acids. The sequence is that of Signal peptidase complex catalytic subunit SEC11 (SEC11) from Arthroderma gypseum (strain ATCC MYA-4604 / CBS 118893) (Microsporum gypseum).